The following is a 271-amino-acid chain: Tryptophan synthase alpha chain (271 aa).

Active-site proton acceptor residues include E47 and D58.

Belongs to the TrpA family. Tetramer of two alpha and two beta chains.

The catalysed reaction is (1S,2R)-1-C-(indol-3-yl)glycerol 3-phosphate + L-serine = D-glyceraldehyde 3-phosphate + L-tryptophan + H2O. It participates in amino-acid biosynthesis; L-tryptophan biosynthesis; L-tryptophan from chorismate: step 5/5. Functionally, the alpha subunit is responsible for the aldol cleavage of indoleglycerol phosphate to indole and glyceraldehyde 3-phosphate. The polypeptide is Tryptophan synthase alpha chain (Thermus thermophilus (strain ATCC BAA-163 / DSM 7039 / HB27)).